Reading from the N-terminus, the 226-residue chain is Small ribosomal subunit protein uS3 (226 aa).

The 69-residue stretch at Ile-39–Lys-107 folds into the KH type-2 domain.

This sequence belongs to the universal ribosomal protein uS3 family. In terms of assembly, part of the 30S ribosomal subunit. Forms a tight complex with proteins S10 and S14.

In terms of biological role, binds the lower part of the 30S subunit head. Binds mRNA in the 70S ribosome, positioning it for translation. This chain is Small ribosomal subunit protein uS3, found in Pelagibacter ubique (strain HTCC1062).